The primary structure comprises 542 residues: Chondroitin sulfate N-acetylgalactosaminyltransferase 2 (542 aa).

At 1–11 the chain is on the cytoplasmic side; that stretch reads MPRRGLILHTR. Residues 12–32 form a helical; Signal-anchor for type II membrane protein membrane-spanning segment; sequence THWLLLGLALLCSLVLFMYLL. Topologically, residues 33–542 are lumenal; it reads ECAPQTDGNA…AYRTNSEAVG (510 aa). Asn-41 carries N-linked (GlcNAc...) asparagine glycosylation. Positions 59–105 form a coiled coil; that stretch reads ALLQEQEEHYQTRATSLKRQIAQLKQELQEMSEKMRSLQERRNVGAN. Asn-333 is a glycosylation site (N-linked (GlcNAc...) asparagine). 2 residues coordinate a divalent metal cation: Asp-369 and His-486.

It belongs to the chondroitin N-acetylgalactosaminyltransferase family. In terms of tissue distribution, ubiquitous.

The protein localises to the golgi apparatus. It localises to the golgi stack membrane. It catalyses the reaction 3-O-(beta-D-GlcA-(1-&gt;3)-beta-D-Gal-(1-&gt;3)-beta-D-Gal-(1-&gt;4)-beta-D-Xyl)-L-seryl-[protein] + UDP-N-acetyl-alpha-D-galactosamine = 3-O-(beta-D-GalNAc-(1-&gt;4)-beta-D-GlcA-(1-&gt;3)-beta-D-Gal-(1-&gt;3)-beta-D-Gal-(1-&gt;4)-beta-D-Xyl)-L-seryl-[protein] + UDP + H(+). Functionally, transfers 1,4-N-acetylgalactosamine (GalNAc) from UDP-GalNAc to the non-reducing end of glucuronic acid (GlcUA). Required for addition of the first GalNAc to the core tetrasaccharide linker and for elongation of chondroitin chains. This is Chondroitin sulfate N-acetylgalactosaminyltransferase 2 (CSGALNACT2) from Homo sapiens (Human).